Consider the following 429-residue polypeptide: Glucose-6-phosphate isomerase (429 aa).

The active-site Proton donor is the glutamate 282. Active-site residues include histidine 303 and lysine 418.

The protein belongs to the GPI family.

Its subcellular location is the cytoplasm. The catalysed reaction is alpha-D-glucose 6-phosphate = beta-D-fructose 6-phosphate. It participates in carbohydrate biosynthesis; gluconeogenesis. Its pathway is carbohydrate degradation; glycolysis; D-glyceraldehyde 3-phosphate and glycerone phosphate from D-glucose: step 2/4. Functionally, catalyzes the reversible isomerization of glucose-6-phosphate to fructose-6-phosphate. The chain is Glucose-6-phosphate isomerase from Mesomycoplasma hyopneumoniae (strain 232) (Mycoplasma hyopneumoniae).